The sequence spans 625 residues: Interleukin-1 receptor-associated kinase-like 2 (625 aa).

The region spanning 13 to 94 is the Death domain; the sequence is LDDLCRNMDA…RAAQIILNWK (82 aa). The tract at residues 111 to 181 is disordered; sequence KPEKPLAASV…SSDSKDFSTS (71 aa). Serine 144 is subject to Phosphoserine. Polar residues predominate over residues 169-181; it reads LPTSSDSKDFSTS. A Protein kinase domain is found at 210 to 489; the sequence is FNQNRKISQG…LCLRRRNTSL (280 aa). ATP contacts are provided by residues 216–224, lysine 237, and 337–340; these read ISQGTFADV and KSSN. The interval 510-540 is disordered; sequence LPWSGLSEGTGSSSNTPEETDDVDNSSLDAS. The segment covering 516–526 has biased composition (polar residues); that stretch reads SEGTGSSSNTP.

This sequence belongs to the protein kinase superfamily. TKL Ser/Thr protein kinase family. Pelle subfamily. In terms of assembly, interacts with MYD88. IL-1 stimulation leads to the formation of a signaling complex which dissociates from the IL-1 receptor following the binding of PELI1. In terms of tissue distribution, expressed in spleen, thymus, prostate, lung, liver, skeletal muscle, kidney, pancreas and peripheral blood leukocytes.

Its function is as follows. Binds to the IL-1 type I receptor following IL-1 engagement, triggering intracellular signaling cascades leading to transcriptional up-regulation and mRNA stabilization. The sequence is that of Interleukin-1 receptor-associated kinase-like 2 (IRAK2) from Homo sapiens (Human).